Consider the following 319-residue polypeptide: ATP-dependent 6-phosphofructokinase (319 aa).

Position 11 (G11) interacts with ATP. An ADP-binding site is contributed by 21–25 (RAVVR). ATP-binding positions include 72-73 (RC) and 102-105 (GDGS). Residue D103 coordinates Mg(2+). 125–127 (TID) provides a ligand contact to substrate. D127 (proton acceptor) is an active-site residue. Position 154 (R154) interacts with ADP. Substrate is bound by residues R162 and 169 to 171 (MGR). Residues 185-187 (GAE), R211, and 213-215 (KKH) each bind ADP. Residues E222, R243, and 249–252 (HVQR) each bind substrate.

Belongs to the phosphofructokinase type A (PFKA) family. ATP-dependent PFK group I subfamily. Prokaryotic clade 'B1' sub-subfamily. As to quaternary structure, homotetramer. Requires Mg(2+) as cofactor.

Its subcellular location is the cytoplasm. It carries out the reaction beta-D-fructose 6-phosphate + ATP = beta-D-fructose 1,6-bisphosphate + ADP + H(+). It functions in the pathway carbohydrate degradation; glycolysis; D-glyceraldehyde 3-phosphate and glycerone phosphate from D-glucose: step 3/4. Allosterically activated by ADP and other diphosphonucleosides, and allosterically inhibited by phosphoenolpyruvate. In terms of biological role, catalyzes the phosphorylation of D-fructose 6-phosphate to fructose 1,6-bisphosphate by ATP, the first committing step of glycolysis. The polypeptide is ATP-dependent 6-phosphofructokinase (Bacillus mycoides (strain KBAB4) (Bacillus weihenstephanensis)).